The primary structure comprises 828 residues: Zinc finger protein 438 (828 aa).

Disordered stretches follow at residues 1 to 29, 143 to 173, and 193 to 231; these read MQNS…KGLQ, KSGC…LYKP, and ALTN…PAKQ. Composition is skewed to polar residues over residues 16-29 and 150-159; these read NIPS…KGLQ and PAQTQMCPQM. 3 consecutive C2H2-type zinc fingers follow at residues 507–529, 535–557, and 567–590; these read HRCH…MNTH, YSCR…MKLH, and MCCE…KEVH. A disordered region spans residues 680–721; the sequence is EGTFPGSKGTQEELVQHASPDWKRHPERGKPEKVHSSSEESH. Basic and acidic residues predominate over residues 689–721; that stretch reads TQEELVQHASPDWKRHPERGKPEKVHSSSEESH. The C2H2-type 4 zinc finger occupies 776 to 799; it reads FNCLLCAEMLGRKEDLLHHWKHQH.

This sequence belongs to the krueppel C2H2-type zinc-finger protein family. As to expression, ubiquitous.

It localises to the nucleus. Isoform 1 acts as a transcriptional repressor. The protein is Zinc finger protein 438 (ZNF438) of Homo sapiens (Human).